The following is a 187-amino-acid chain: Ribosome-recycling factor (187 aa).

The protein belongs to the RRF family.

It is found in the cytoplasm. Functionally, responsible for the release of ribosomes from messenger RNA at the termination of protein biosynthesis. May increase the efficiency of translation by recycling ribosomes from one round of translation to another. In Parabacteroides distasonis (strain ATCC 8503 / DSM 20701 / CIP 104284 / JCM 5825 / NCTC 11152), this protein is Ribosome-recycling factor.